The primary structure comprises 132 residues: Spermatogenesis-associated protein 33 (132 aa).

The tract at residues 1–60 (MGQSKSKPREKKEEEKSTTTLVTKSKEKVMEKEAKQSDKESQPAESLLFATSKHSRPSSS) is interaction with ATG16L1. A disordered region spans residues 1-81 (MGQSKSKPRE…SKKRSVIPQI (81 aa)). The span at 24–42 (KSKEKVMEKEAKQSDKESQ) shows a compositional bias: basic and acidic residues. Positions 61–132 (SEDKPETKQR…IAAYDVHNTE (72 aa)) are interaction with VDAC2. Positions 79 to 84 (PQIIIT) match the PQIIIT motif. Ser-87 carries the post-translational modification Phosphoserine. The tract at residues 110 to 132 (DWGPYHRHRSPSTIAAYDVHNTE) is disordered.

In terms of assembly, interacts (via PQIIIT motif) with PPP3R2 and PPP3CC. Interacts with VDAC2. Interacts with ATG16L1 (via WD repeats). Interacts with PPP3R1, PPP3CA and PPP3CB. Predominantly expressed in the testis (at protein level). Expressed in the sperm midpiece (at protein level).

The protein resides in the cytoplasm. Its subcellular location is the cytosol. The protein localises to the nucleus. It localises to the mitochondrion. In terms of biological role, plays an important role in sperm motility and male fertility. Required for sperm midpiece flexibility and for the localization of sperm calcineurin to the mitochondria. Promotes mitophagy as well as acts as an autophagy mediator in male germline cells. Links damaged mitochondria to autophagosomes via its binding to the outer mitochondrial membrane protein VDAC2, as well as to key autophagy machinery component ATG16L1. In Mus musculus (Mouse), this protein is Spermatogenesis-associated protein 33 (Spata33).